Reading from the N-terminus, the 62-residue chain is Short neurotoxin 3 (62 aa).

4 cysteine pairs are disulfide-bonded: cysteine 3/cysteine 24, cysteine 17/cysteine 41, cysteine 43/cysteine 54, and cysteine 55/cysteine 60.

Belongs to the three-finger toxin family. Short-chain subfamily. Type I alpha-neurotoxin sub-subfamily. Expressed by the venom gland.

Its subcellular location is the secreted. Binds to muscle nicotinic acetylcholine receptor (nAChR) and inhibit acetylcholine from binding to the receptor, thereby impairing neuromuscular transmission. The chain is Short neurotoxin 3 from Naja mossambica (Mozambique spitting cobra).